The following is a 463-amino-acid chain: Dialkyldecalin synthase (463 aa).

FAD contacts are provided by residues Val13, 32–33 (ER), Ile121, and Asp275.

This sequence belongs to the PheA/TfdB FAD monooxygenase family. Homodimer. The cofactor is FAD.

It carries out the reaction 4-[(2E,7S,8E,10E,13R,14R,16E,18E)-14-ethyl-7,13-dihydroxy-2,16,18-trimethylicosa-2,8,10,16,18-pentaenoyl]-2-methylidene-5-oxo-2,5-dihydro-1H-pyrrol-3-olate = 4-[(1R,2R,4aS,5S,8aR)-2-[(2R,3R,5E,7E)-3-ethyl-2-hydroxy-5,7-dimethylnona-5,7-dien-1-yl]-5-hydroxy-1-methyl-1,2,4a,5,6,7,8,8a-octahydronaphthalene-1-carbonyl]-2-methylidene-5-oxo-2,5-dihydro-1H-pyrrol-3-olate. The protein operates within antibiotic biosynthesis. Involved in the biosynthesis of the spirotetramate antibiotics pyrroindomycins. Catalyzes the intramolecular cyclization forming the dialkyldecalin moiety in pyrroindomycins, via an endo-selective [4+2] cycloaddition reaction. This is Dialkyldecalin synthase from Streptomyces rugosporus.